A 163-amino-acid polypeptide reads, in one-letter code: uncharacterized protein (163 aa).

The helical transmembrane segment at 7–23 (TLVAFIATFFNLAATSI) threads the bilayer.

The protein resides in the membrane. This is an uncharacterized protein from Saccharomyces cerevisiae (strain ATCC 204508 / S288c) (Baker's yeast).